We begin with the raw amino-acid sequence, 352 residues long: N-acetyl-gamma-glutamyl-phosphate reductase (352 aa).

C155 is an active-site residue.

This sequence belongs to the NAGSA dehydrogenase family. Type 1 subfamily.

Its subcellular location is the cytoplasm. The catalysed reaction is N-acetyl-L-glutamate 5-semialdehyde + phosphate + NADP(+) = N-acetyl-L-glutamyl 5-phosphate + NADPH + H(+). It participates in amino-acid biosynthesis; L-arginine biosynthesis; N(2)-acetyl-L-ornithine from L-glutamate: step 3/4. Its function is as follows. Catalyzes the NADPH-dependent reduction of N-acetyl-5-glutamyl phosphate to yield N-acetyl-L-glutamate 5-semialdehyde. This chain is N-acetyl-gamma-glutamyl-phosphate reductase, found in Synechococcus elongatus (strain ATCC 33912 / PCC 7942 / FACHB-805) (Anacystis nidulans R2).